The following is a 142-amino-acid chain: Galactose-6-phosphate isomerase subunit LacA 2 (142 aa).

Belongs to the LacAB/RpiB family. In terms of assembly, heteromultimeric protein consisting of LacA and LacB.

It carries out the reaction aldehydo-D-galactose 6-phosphate = keto-D-tagatose 6-phosphate. It participates in carbohydrate metabolism; D-galactose 6-phosphate degradation; D-tagatose 6-phosphate from D-galactose 6-phosphate: step 1/1. The chain is Galactose-6-phosphate isomerase subunit LacA 2 from Streptococcus pyogenes serotype M1.